Reading from the N-terminus, the 119-residue chain is V-type proton ATPase subunit F (119 aa).

The protein belongs to the V-ATPase F subunit family. As to quaternary structure, V-ATPase is a heteromultimeric enzyme composed of a peripheral catalytic V1 complex (components A to H) attached to an integral membrane V0 proton pore complex (components: a, c, c', c'', d, e, f and VOA1).

Its subcellular location is the vacuole membrane. Functionally, subunit of the V1 complex of vacuolar(H+)-ATPase (V-ATPase), a multisubunit enzyme composed of a peripheral complex (V1) that hydrolyzes ATP and a membrane integral complex (V0) that translocates protons. V-ATPase is responsible for acidifying and maintaining the pH of intracellular compartments. This is V-type proton ATPase subunit F (VMA7) from Vanderwaltozyma polyspora (strain ATCC 22028 / DSM 70294 / BCRC 21397 / CBS 2163 / NBRC 10782 / NRRL Y-8283 / UCD 57-17) (Kluyveromyces polysporus).